We begin with the raw amino-acid sequence, 225 residues long: Flagellar transcriptional regulator FlhC (225 aa).

4 residues coordinate Zn(2+): Cys-149, Cys-152, Cys-169, and Cys-172.

It belongs to the FlhC family. As to quaternary structure, heterohexamer composed of two FlhC and four FlhD subunits. Each FlhC binds a FlhD dimer, forming a heterotrimer, and a hexamer assembles by dimerization of two heterotrimers. The cofactor is Zn(2+).

It localises to the cytoplasm. In terms of biological role, functions in complex with FlhD as a master transcriptional regulator that regulates transcription of several flagellar and non-flagellar operons by binding to their promoter region. Activates expression of class 2 flagellar genes, including fliA, which is a flagellum-specific sigma factor that turns on the class 3 genes. Also regulates genes whose products function in a variety of physiological pathways. The protein is Flagellar transcriptional regulator FlhC of Burkholderia lata (strain ATCC 17760 / DSM 23089 / LMG 22485 / NCIMB 9086 / R18194 / 383).